A 270-amino-acid chain; its full sequence is Release factor glutamine methyltransferase (270 aa).

S-adenosyl-L-methionine contacts are provided by residues Gly112–Gly116, Asp135, Trp162, and Asn178. Substrate is bound at residue Asn178 to Tyr181.

Belongs to the protein N5-glutamine methyltransferase family. PrmC subfamily.

The enzyme catalyses L-glutaminyl-[peptide chain release factor] + S-adenosyl-L-methionine = N(5)-methyl-L-glutaminyl-[peptide chain release factor] + S-adenosyl-L-homocysteine + H(+). Methylates the class 1 translation termination release factors RF1/PrfA and RF2/PrfB on the glutamine residue of the universally conserved GGQ motif. This chain is Release factor glutamine methyltransferase, found in Bordetella pertussis (strain Tohama I / ATCC BAA-589 / NCTC 13251).